Consider the following 410-residue polypeptide: Peptidase T (410 aa).

His79 serves as a coordination point for Zn(2+). Asp81 is an active-site residue. Asp142 contributes to the Zn(2+) binding site. Glu176 (proton acceptor) is an active-site residue. Zn(2+) contacts are provided by Glu177, Asp199, and His381.

The protein belongs to the peptidase M20B family. Zn(2+) serves as cofactor.

It is found in the cytoplasm. It catalyses the reaction Release of the N-terminal residue from a tripeptide.. Its function is as follows. Cleaves the N-terminal amino acid of tripeptides. The chain is Peptidase T (pepT) from Bacillus subtilis (strain 168).